Here is a 218-residue protein sequence, read N- to C-terminus: Small ribosomal subunit protein uS3c (218 aa).

The KH type-2 domain occupies 39–109; sequence IRNYVKVNLS…QIRINVTELK (71 aa).

Belongs to the universal ribosomal protein uS3 family. Part of the 30S ribosomal subunit.

It localises to the plastid. The protein localises to the chloroplast. This chain is Small ribosomal subunit protein uS3c (rps3), found in Rhodomonas salina (Cryptomonas salina).